The following is a 148-amino-acid chain: 3-dehydroquinate dehydratase (148 aa).

Tyr23 acts as the Proton acceptor in catalysis. Substrate-binding residues include Asn74, His80, and Asp87. The Proton donor role is filled by His100. Substrate contacts are provided by residues 101–102 and Arg111; that span reads IS.

The protein belongs to the type-II 3-dehydroquinase family. In terms of assembly, homododecamer.

The catalysed reaction is 3-dehydroquinate = 3-dehydroshikimate + H2O. Its pathway is metabolic intermediate biosynthesis; chorismate biosynthesis; chorismate from D-erythrose 4-phosphate and phosphoenolpyruvate: step 3/7. Its function is as follows. Catalyzes a trans-dehydration via an enolate intermediate. The sequence is that of 3-dehydroquinate dehydratase from Halothermothrix orenii (strain H 168 / OCM 544 / DSM 9562).